We begin with the raw amino-acid sequence, 2004 residues long: Histone acetyltransferase KAT6A (2004 aa).

An SAMD1-like winged helix (WH) domain is found at 1–77; that stretch reads MVKLANPLYT…LNSYKDPDNP (77 aa). The tract at residues 1–144 is required for activation of RUNX1-1; it reads MVKLANPLYT…FGGSAASGFH (144 aa). The required for nuclear localization stretch occupies residues 52–166; it reads ELSVKDGTIL…HGRLLKDGPL (115 aa). One can recognise an H15 domain in the interval 95–171; the sequence is QNVDWNKLIK…KDGPLYRLNT (77 aa). An interaction with PML region spans residues 144–664; the sequence is HQQLRLAIKR…RKGYGRFLID (521 aa). At Lys172 the chain carries N6-acetyllysine. 2 consecutive PHD-type zinc fingers follow at residues 206 to 265 and 259 to 313; these read IPIC…CKTC and CIEC…CRPR. Residues 312 to 664 form an interaction with RUNX1-1 region; the sequence is PRKKGRKLLQ…RKGYGRFLID (353 aa). Residues 334–375 form a disordered region; that stretch reads PIGRPKNRLKKQNTVSKGPFSKVRTGPGRGRKRKITLSSQSA. N6-acetyllysine occurs at positions 350 and 355. Thr369 is subject to Phosphothreonine; by PKB/AKT1. Ser420 bears the Phosphoserine mark. The segment at 441 to 464 is disordered; that stretch reads KRGNRKSSTSDWPTDNQDGWDGKQ. The span at 446 to 457 shows a compositional bias: polar residues; it reads KSSTSDWPTDNQ. The residue at position 473 (Ser473) is a Phosphoserine. Residues 488–778 form a catalytic region; the sequence is IQEQALQKVG…VDPECLRWTP (291 aa). Residues 504–778 enclose the MYST-type HAT domain; the sequence is PQVRCPSVIE…VDPECLRWTP (275 aa). Residues 507–810 form a mediates interaction with BRPF1, required for histone H3 acetyltransferase activity region; sequence RCPSVIEFGK…EPQCQERELE (304 aa). The segment at 537–562 adopts a C2HC MYST-type zinc-finger fold; that stretch reads LYLCEFCLKYMKSRTILQQHMKKCGW. An N6-acetyllysine; by autocatalysis modification is found at Lys604. Acetyl-CoA-binding positions include 645–649 and 654–660; these read SCIMI and QRKGYGR. Glu680 serves as the catalytic Proton donor/acceptor. Residue Ser684 coordinates acetyl-CoA. Disordered regions lie at residues 785 to 1445, 1461 to 1621, and 1637 to 1721; these read VVSE…AYQD, QADE…MMQQ, and SCVV…MEIP. 2 positions are modified to phosphoserine: Ser787 and Ser812. The segment covering 787 to 803 has biased composition (acidic residues); the sequence is SEEEEEEAEEGENEEPQ. Residue Lys815 is modified to N6-acetyllysine. Basic and acidic residues predominate over residues 817-836; it reads VSHENKEQDSYSVESEKKPE. Residue Lys834 forms a Glycyl lysine isopeptide (Lys-Gly) (interchain with G-Cter in SUMO2) linkage. Over residues 864–873 the composition is skewed to basic residues; it reads RRGRWGRKNR. The segment covering 874–888 has biased composition (basic and acidic residues); that stretch reads KTQERFGDKDSKLLL. Tyr899 is subject to Phosphotyrosine. Basic and acidic residues-rich tracts occupy residues 931–942 and 953–980; these read GKPDLPKRRLSE and KSPE…DRAV. Phosphoserine occurs at positions 941, 954, and 974. An N6-acetyllysine modification is found at Lys1007. A compositionally biased stretch (basic residues) spans 1009 to 1030; that stretch reads TLKRKKPFLHRRRRVRKRKHHN. Over residues 1031-1042 the composition is skewed to low complexity; it reads SSVVTETISETT. Acidic residues-rich tracts occupy residues 1043 to 1053 and 1065 to 1078; these read EVLDEPFEDSD and FEID…DENE. Phosphoserine occurs at positions 1089, 1090, and 1113. Over residues 1107 to 1118 the composition is skewed to acidic residues; sequence EEEDEESDDADD. Residues 1146 to 1172 are compositionally biased toward basic residues; the sequence is LKKKKGWPKGKSRKPIHWKKRPGRKPG. Over residues 1203–1223 the composition is skewed to basic and acidic residues; sequence KIQESEETVEPKEDMPLPEER. Residues 1224-1245 show a composition bias toward acidic residues; it reads KEEEEMQAEAEEAEEGEEEDAA. The span at 1246–1262 shows a compositional bias: low complexity; the sequence is SSEVPAASPADSSNSPE. A compositionally biased stretch (basic and acidic residues) spans 1275–1287; the sequence is EKPRVSEEQRQSE. The segment covering 1288-1305 has biased composition (acidic residues); the sequence is EEQQELEEPEPEEEEDAA. Basic and acidic residues-rich tracts occupy residues 1323 to 1345, 1358 to 1367, and 1398 to 1420; these read HLES…KEEP, KSREKIKDKE, and EDSH…HSEL. A Glycyl lysine isopeptide (Lys-Gly) (interchain with G-Cter in SUMO2) cross-link involves residue Lys1342. Low complexity predominate over residues 1481-1503; that stretch reads SPISSVQSHPSQSVRSVSSPNVP. Over residues 1508–1529 the composition is skewed to polar residues; sequence GYTQISPEQGSLSAPSMQNMET. Positions 1517–1642 are interaction with RUNX1-2; that stretch reads GSLSAPSMQN…KSPQSCVVER (126 aa). The interval 1517–1741 is interaction with PML; it reads GSLSAPSMQN…YERIPGDFGA (225 aa). Residues 1534–1548 are compositionally biased toward low complexity; sequence DVPSVSDHSQQVVDS. The segment covering 1556–1573 has biased composition (polar residues); the sequence is IESTTENYENPSSYDSTM. Over residues 1574-1621 the composition is skewed to low complexity; it reads GGSICGNSSSQSSCSYGGLSSSSSLTQSSCVVTQQMASMGSSCSMMQQ. The segment covering 1650-1699 has biased composition (pro residues); the sequence is QPPPPPPQQPQPPPPQPQPAPQPPPPQQQPQQQPQPQPQQPPPPPPPQQQ. Polar residues predominate over residues 1702-1712; the sequence is LSQCSMNNSFT. The required for activation of RUNX1-2 stretch occupies residues 1913–1948; sequence SMNMNTLNAMNSYRMTQPMMNSSYHSNPAYMNQTAQ.

Belongs to the MYST (SAS/MOZ) family. As to quaternary structure, component of the MOZ/MORF complex composed at least of ING5, KAT6A, KAT6B, MEAF6 and one of BRPF1, BRD1/BRPF2 and BRPF3. Interacts with RUNX1; phosphorylation of RUNX1 enhances the interaction. Interacts with RUNX2. Interacts with p53/TP53. Interacts with PML (isoform PML-4) and this interaction positively regulates its acetylation activity towards p53/TP53. Post-translationally, autoacetylation at Lys-604 is required for proper function. Autoacetylated. In terms of processing, phosphorylation at Thr-369 by PKB/AKT1 inhibits its interaction with PML and negatively regulates its acetylation activity towards p53/TP53.

It localises to the nucleus. It is found in the nucleolus. The protein localises to the nucleoplasm. The protein resides in the PML body. The catalysed reaction is L-lysyl-[protein] + acetyl-CoA = N(6)-acetyl-L-lysyl-[protein] + CoA + H(+). Functionally, histone acetyltransferase that acetylates lysine residues in histone H3 and histone H4 (in vitro). Component of the MOZ/MORF complex which has a histone H3 acetyltransferase activity. May act as a transcriptional coactivator for RUNX1 and RUNX2. Acetylates p53/TP53 at 'Lys-120' and 'Lys-382' and controls its transcriptional activity via association with PML. This is Histone acetyltransferase KAT6A (KAT6A) from Homo sapiens (Human).